A 239-amino-acid polypeptide reads, in one-letter code: Pentatricopeptide repeat-containing protein DWY1, chloroplastic (239 aa).

The transit peptide at 1-35 directs the protein to the chloroplast; it reads MALEAAFSMSFCSFSVPKAIFCERETSSFQRITSR. 2 disordered regions span residues 40 to 59 and 101 to 122; these read AGES…KETS and HISP…SGGE. The span at 111-122 shows a compositional bias: basic and acidic residues; it reads VRGDKPEISGGE. Residues 113 to 144 form a type E(+) motif region; sequence GDKPEISGGEKKAIVDRSKAYVKLKSLGKEVR. The segment at 145–239 is type DYW motif; it reads DAGYVPETKY…DGNCSCGDYW (95 aa).

This sequence belongs to the PPR family. PCMP-H subfamily. Interacts with CRR4. Zn(2+) is required as a cofactor.

The protein localises to the plastid. Its subcellular location is the chloroplast. Plays a major role in single RNA editing events in chloroplasts. Acts as a site-recognition transacting factor involved in the edition of the site 1 of ndhD (ndhD-1 site corresponding to cytidine-2), which is a plastid-encoded subunit of the NADH-plastoquinone oxidoreductase. The interaction with CRR4 is required for its function in editing the ndhD-1 site. This Arabidopsis thaliana (Mouse-ear cress) protein is Pentatricopeptide repeat-containing protein DWY1, chloroplastic.